The chain runs to 400 residues: Nicotinate phosphoribosyltransferase (400 aa).

His220 is subject to Phosphohistidine; by autocatalysis.

Belongs to the NAPRTase family. Transiently phosphorylated on a His residue during the reaction cycle. Phosphorylation strongly increases the affinity for substrates and increases the rate of nicotinate D-ribonucleotide production. Dephosphorylation regenerates the low-affinity form of the enzyme, leading to product release.

The enzyme catalyses nicotinate + 5-phospho-alpha-D-ribose 1-diphosphate + ATP + H2O = nicotinate beta-D-ribonucleotide + ADP + phosphate + diphosphate. Its pathway is cofactor biosynthesis; NAD(+) biosynthesis; nicotinate D-ribonucleotide from nicotinate: step 1/1. Its function is as follows. Catalyzes the synthesis of beta-nicotinate D-ribonucleotide from nicotinate and 5-phospho-D-ribose 1-phosphate at the expense of ATP. The sequence is that of Nicotinate phosphoribosyltransferase from Salmonella typhimurium (strain LT2 / SGSC1412 / ATCC 700720).